The primary structure comprises 209 residues: Probable E3 ubiquitin-protein ligase NleG7 (209 aa).

This sequence belongs to the NleG E3 ligase family. Post-translationally, two sizes of protein are detected in situ; only the smaller protein is secreted.

The protein resides in the secreted. It is found in the host cytoplasm. The catalysed reaction is S-ubiquitinyl-[E2 ubiquitin-conjugating enzyme]-L-cysteine + [acceptor protein]-L-lysine = [E2 ubiquitin-conjugating enzyme]-L-cysteine + N(6)-ubiquitinyl-[acceptor protein]-L-lysine.. Effector proteins function to alter host cell physiology and promote bacterial survival in host tissues. This protein is probably an E3 ubiquitin-protein ligase that interferes with the host's ubiquitination pathway and targets host proteins for proteasomal degradation. Mice infected with a strain of bacteria deleted for this gene were colonized less quickly by bacteria. The chain is Probable E3 ubiquitin-protein ligase NleG7 from Citrobacter rodentium.